Reading from the N-terminus, the 324-residue chain is ATP-dependent 6-phosphofructokinase (324 aa).

Position 15 (G15) interacts with ATP. 25 to 29 (RGVVR) provides a ligand contact to ADP. Residues 76 to 77 (RF) and 106 to 109 (GDGS) each bind ATP. D107 is a binding site for Mg(2+). A substrate-binding site is contributed by 130–132 (TID). The active-site Proton acceptor is D132. R159 serves as a coordination point for ADP. Residues R167 and 174–176 (MGR) each bind substrate. ADP-binding positions include 190 to 192 (GCE), K216, and 218 to 220 (KRH). Substrate is bound by residues E227, R248, and 254–257 (HIQR).

This sequence belongs to the phosphofructokinase type A (PFKA) family. ATP-dependent PFK group I subfamily. Prokaryotic clade 'B1' sub-subfamily. Homotetramer. Mg(2+) is required as a cofactor.

It is found in the cytoplasm. The catalysed reaction is beta-D-fructose 6-phosphate + ATP = beta-D-fructose 1,6-bisphosphate + ADP + H(+). It participates in carbohydrate degradation; glycolysis; D-glyceraldehyde 3-phosphate and glycerone phosphate from D-glucose: step 3/4. Allosterically activated by ADP and other diphosphonucleosides, and allosterically inhibited by phosphoenolpyruvate. Functionally, catalyzes the phosphorylation of D-fructose 6-phosphate to fructose 1,6-bisphosphate by ATP, the first committing step of glycolysis. This is ATP-dependent 6-phosphofructokinase from Haemophilus ducreyi (strain 35000HP / ATCC 700724).